A 252-amino-acid chain; its full sequence is Trans-aconitate 2-methyltransferase (252 aa).

The protein belongs to the methyltransferase superfamily. Tam family.

The protein localises to the cytoplasm. It carries out the reaction trans-aconitate + S-adenosyl-L-methionine = (E)-3-(methoxycarbonyl)pent-2-enedioate + S-adenosyl-L-homocysteine. Catalyzes the S-adenosylmethionine monomethyl esterification of trans-aconitate. The chain is Trans-aconitate 2-methyltransferase from Shigella flexneri.